The sequence spans 179 residues: Inner membrane-spanning protein YciB (179 aa).

Transmembrane regions (helical) follow at residues 22 to 42, 50 to 70, 76 to 96, 121 to 141, and 149 to 169; these read IYAA…YSWV, MALI…FFHN, WKVT…QWVM, LAWA…AFWL, and FKVF…GIYI.

Belongs to the YciB family.

The protein localises to the cell inner membrane. In terms of biological role, plays a role in cell envelope biogenesis, maintenance of cell envelope integrity and membrane homeostasis. This is Inner membrane-spanning protein YciB from Klebsiella pneumoniae (strain 342).